A 292-amino-acid chain; its full sequence is Acetyl-coenzyme A carboxylase carboxyl transferase subunit beta (292 aa).

One can recognise a CoA carboxyltransferase N-terminal domain in the interval 36–292 (MWSKCEKCAK…LLRMHEVDYE (257 aa)). Zn(2+) contacts are provided by Cys40, Cys43, Cys59, and Cys62. The C4-type zinc-finger motif lies at 40–62 (CEKCAKILYTEDLRENFNVCPNC).

It belongs to the AccD/PCCB family. In terms of assembly, acetyl-CoA carboxylase is a heterohexamer composed of biotin carboxyl carrier protein (AccB), biotin carboxylase (AccC) and two subunits each of ACCase subunit alpha (AccA) and ACCase subunit beta (AccD). The cofactor is Zn(2+).

Its subcellular location is the cytoplasm. It carries out the reaction N(6)-carboxybiotinyl-L-lysyl-[protein] + acetyl-CoA = N(6)-biotinyl-L-lysyl-[protein] + malonyl-CoA. Its pathway is lipid metabolism; malonyl-CoA biosynthesis; malonyl-CoA from acetyl-CoA: step 1/1. Its function is as follows. Component of the acetyl coenzyme A carboxylase (ACC) complex. Biotin carboxylase (BC) catalyzes the carboxylation of biotin on its carrier protein (BCCP) and then the CO(2) group is transferred by the transcarboxylase to acetyl-CoA to form malonyl-CoA. The polypeptide is Acetyl-coenzyme A carboxylase carboxyl transferase subunit beta (Clostridium perfringens (strain 13 / Type A)).